The sequence spans 305 residues: GTP cyclohydrolase FolE2 (305 aa).

The protein belongs to the GTP cyclohydrolase IV family.

It catalyses the reaction GTP + H2O = 7,8-dihydroneopterin 3'-triphosphate + formate + H(+). It participates in cofactor biosynthesis; 7,8-dihydroneopterin triphosphate biosynthesis; 7,8-dihydroneopterin triphosphate from GTP: step 1/1. Functionally, converts GTP to 7,8-dihydroneopterin triphosphate. This chain is GTP cyclohydrolase FolE2, found in Xanthomonas axonopodis pv. citri (strain 306).